The sequence spans 217 residues: Glycosylphosphatidylinositol anchor biosynthesis protein 11 (217 aa).

N-linked (GlcNAc...) asparagine glycosylation is present at Asn-20. The next 6 helical transmembrane spans lie at 41–61 (VYVR…LYWF), 66–86 (DFNL…YLIF), 107–127 (FITL…IVLF), 139–159 (WLLA…VFNC), 169–189 (YFIS…LDWD), and 197–217 (VPLI…GGYI).

It belongs to the PIGF family.

It localises to the endoplasmic reticulum membrane. It functions in the pathway glycolipid biosynthesis; glycosylphosphatidylinositol-anchor biosynthesis. In terms of biological role, acts in the GPI biosynthetic pathway between GlcNAc-PI synthesis and GPI transfer to protein. This chain is Glycosylphosphatidylinositol anchor biosynthesis protein 11 (GPI11), found in Kluyveromyces lactis (strain ATCC 8585 / CBS 2359 / DSM 70799 / NBRC 1267 / NRRL Y-1140 / WM37) (Yeast).